Reading from the N-terminus, the 246-residue chain is 3'(2'),5'-bisphosphate nucleotidase CysQ (246 aa).

Mg(2+) contacts are provided by Glu64, Asp83, Leu85, Asp86, and Asp205. Residue Glu64 participates in substrate binding. Substrate is bound by residues 85-88 (LDGT) and Asp205.

Belongs to the inositol monophosphatase superfamily. CysQ family. Mg(2+) is required as a cofactor.

It is found in the cell inner membrane. The enzyme catalyses adenosine 3',5'-bisphosphate + H2O = AMP + phosphate. Its function is as follows. Converts adenosine-3',5'-bisphosphate (PAP) to AMP. In Salmonella typhimurium (strain LT2 / SGSC1412 / ATCC 700720), this protein is 3'(2'),5'-bisphosphate nucleotidase CysQ.